The chain runs to 455 residues: Succinyl-CoA--L-malate CoA-transferase alpha subunit (455 aa).

The interval 1–58 (MAKASRLTRSTGQPTEVSEGQVTGTSEMPPTGEEPSGHAESKPPASDPMSTPGTGQEQ) is disordered. Composition is skewed to polar residues over residues 7–28 (LTRS…TSEM) and 48–58 (PMSTPGTGQEQ). The active-site Nucleophile is Asp227.

Belongs to the CoA-transferase III family. Forms a large complex composed of six heterodimers (alpha, beta).

It carries out the reaction succinyl-CoA + (S)-malate = (S)-malyl-CoA + succinate. It catalyses the reaction (3S)-citramalate + succinyl-CoA = (3S)-citramalyl-CoA + succinate. Its function is as follows. Involved in the 3-hydroxypropionate cycle used for autotrophic carbon dioxide fixation. Catalyzes the transfer of CoA moiety from succinyl-CoA to L-malate to yield L-malyl-CoA. This is Succinyl-CoA--L-malate CoA-transferase alpha subunit (smtA) from Chloroflexus aurantiacus (strain ATCC 29366 / DSM 635 / J-10-fl).